A 198-amino-acid chain; its full sequence is Snake venom metalloproteinase neuwiedase (198 aa).

One can recognise a Peptidase M12B domain in the interval 8-198 (RYIELVIVAD…QTFLTNHNPQ (191 aa)). Glu11 and Asp95 together coordinate Ca(2+). His144 is a binding site for Zn(2+). Glu145 is a catalytic residue. Zn(2+) contacts are provided by His148 and His154. Intrachain disulfides connect Cys159–Cys183 and Cys161–Cys166.

The protein belongs to the venom metalloproteinase (M12B) family. P-I subfamily. It depends on Zn(2+) as a cofactor. As to expression, expressed by the venom gland.

It is found in the secreted. Its activity is regulated as follows. Inhibited by EDTA, EGTA and 1,10-phenanthroline, partially inhibited by beta-mercaptoethanol and not inhibited by serine protease inhibitors (leupeptin and aprotinin). Also inhibited by an excess of zinc, mercury and magnesium ions. Extracts of the plant Casearia mariquitensis neutralizes the decrease of platelets and plasma fibrinogen induced by the protease. The same extracts also partially inhibit Bbeta chain cleavage, but not Aalpha chain cleavage. Functionally, this metalloprotease hydrolyzes the Aalpha chain of fibrin and fibrinogen first followed by the Bbeta chain and shows no effect on the gamma chain. It is also able to degrade type I collagen, fibronectin, laminin and induces inflammatory reaction. It is devoid of hemorrhagic and thrombotic activities, except in lung where it induces pulmonary bleeding. It also induces a mild myotoxic reaction. It is not able to inhibit platelet aggregation, but it induces decrease of platelets and plasma fibrinogen. It contributes to local tissue damage by inducing edema, inflammatory infiltrate and mild myotoxicity, and by degrading extracellular matrix components. The protein is Snake venom metalloproteinase neuwiedase of Bothrops pauloensis (Neuwied's lancehead).